A 158-amino-acid chain; its full sequence is Phosphopantetheine adenylyltransferase (158 aa).

Ser9 contacts substrate. ATP is bound by residues 9–10 (SF) and His17. Substrate is bound by residues Lys41, Val73, and Lys87. ATP is bound by residues 88–90 (GLR), Glu98, and 122–128 (YSFVSSS).

This sequence belongs to the bacterial CoaD family. In terms of assembly, homohexamer. Requires Mg(2+) as cofactor.

The protein localises to the cytoplasm. The enzyme catalyses (R)-4'-phosphopantetheine + ATP + H(+) = 3'-dephospho-CoA + diphosphate. It participates in cofactor biosynthesis; coenzyme A biosynthesis; CoA from (R)-pantothenate: step 4/5. Its function is as follows. Reversibly transfers an adenylyl group from ATP to 4'-phosphopantetheine, yielding dephospho-CoA (dPCoA) and pyrophosphate. The protein is Phosphopantetheine adenylyltransferase of Mycobacterium sp. (strain JLS).